A 111-amino-acid chain; its full sequence is MAGRSAVSASSKWLDGFRKWYYNAAGFNKLGLMRDDTLHETEDVKEAIRRLPEDLYNDRMLRIKRALDLTMRHQILPKDQWTKYEEDKFYLEPYLKEVIRERKEREEWAKK.

Residue Ala2 is modified to N-acetylalanine. At Lys12 the chain carries N6-acetyllysine; alternate. At Lys12 the chain carries N6-succinyllysine; alternate. The residue at position 19 (Lys19) is an N6-acetyllysine. Lys78 carries the post-translational modification N6-acetyllysine; alternate. Lys78 carries the N6-succinyllysine; alternate modification. Lys83 bears the N6-acetyllysine mark. N6-acetyllysine; alternate is present on Lys88. Lys88 is subject to N6-succinyllysine; alternate. Residue Lys96 is modified to N6-acetyllysine.

This sequence belongs to the UQCRB/QCR7 family. In terms of assembly, component of the ubiquinol-cytochrome c oxidoreductase (cytochrome b-c1 complex, complex III, CIII), a multisubunit enzyme composed of 11 subunits. The complex is composed of 3 respiratory subunits cytochrome b, cytochrome c1 and Rieske protein UQCRFS1, 2 core protein subunits UQCRC1/QCR1 and UQCRC2/QCR2, and 6 low-molecular weight protein subunits UQCRH/QCR6, UQCRB/QCR7, UQCRQ/QCR8, UQCR10/QCR9, UQCR11/QCR10 and subunit 9, the cleavage product of Rieske protein UQCRFS1. The complex exists as an obligatory dimer and forms supercomplexes (SCs) in the inner mitochondrial membrane with NADH-ubiquinone oxidoreductase (complex I, CI) and cytochrome c oxidase (complex IV, CIV), resulting in different assemblies (supercomplex SCI(1)III(2)IV(1) and megacomplex MCI(2)III(2)IV(2)).

The protein localises to the mitochondrion inner membrane. In terms of biological role, component of the ubiquinol-cytochrome c oxidoreductase, a multisubunit transmembrane complex that is part of the mitochondrial electron transport chain which drives oxidative phosphorylation. The respiratory chain contains 3 multisubunit complexes succinate dehydrogenase (complex II, CII), ubiquinol-cytochrome c oxidoreductase (cytochrome b-c1 complex, complex III, CIII) and cytochrome c oxidase (complex IV, CIV), that cooperate to transfer electrons derived from NADH and succinate to molecular oxygen, creating an electrochemical gradient over the inner membrane that drives transmembrane transport and the ATP synthase. The cytochrome b-c1 complex catalyzes electron transfer from ubiquinol to cytochrome c, linking this redox reaction to translocation of protons across the mitochondrial inner membrane, with protons being carried across the membrane as hydrogens on the quinol. In the process called Q cycle, 2 protons are consumed from the matrix, 4 protons are released into the intermembrane space and 2 electrons are passed to cytochrome c. The protein is Cytochrome b-c1 complex subunit 7 (Uqcrb) of Mus musculus (Mouse).